Here is a 76-residue protein sequence, read N- to C-terminus: Large ribosomal subunit protein uL29 (76 aa).

The protein belongs to the universal ribosomal protein uL29 family.

This is Large ribosomal subunit protein uL29 from Corynebacterium glutamicum (strain R).